The chain runs to 99 residues: Protein Tat (99 aa).

Residues methionine 1 to asparagine 24 form an interaction with human CREBBP region. The tract at residues methionine 1 to glycine 48 is transactivation. Zn(2+) contacts are provided by cysteine 22, cysteine 25, and cysteine 27. Residues cysteine 22–cysteine 37 are cysteine-rich. N6-acetyllysine; by host PCAF is present on lysine 28. Residues cysteine 30, histidine 33, cysteine 34, and cysteine 37 each contribute to the Zn(2+) site. The core stretch occupies residues phenylalanine 38–glycine 48. The segment at tyrosine 47 to proline 99 is disordered. A compositionally biased stretch (basic residues) spans glycine 48 to threonine 58. The Nuclear localization signal, RNA-binding (TAR), and protein transduction signature appears at arginine 49–arginine 57. An interaction with the host capping enzyme RNGTT region spans residues arginine 49–glutamate 86. N6-acetyllysine; by host EP300 and GCN5L2 is present on residues lysine 50 and lysine 51. Asymmetric dimethylarginine; by host PRMT6 occurs at positions 52 and 53. Lysine 71 is covalently cross-linked (Glycyl lysine isopeptide (Lys-Gly) (interchain with G-Cter in ubiquitin)). A Cell attachment site motif is present at residues arginine 78–aspartate 80.

The protein belongs to the lentiviruses Tat family. In terms of assembly, interacts with host CCNT1. Associates with the P-TEFb complex composed at least of Tat, P-TEFb (CDK9 and CCNT1), TAR RNA, RNA Pol II. Recruits the HATs CREBBP, TAF1/TFIID, EP300, PCAF and GCN5L2. Interacts with host KAT5/Tip60; this interaction targets the latter to degradation. Interacts with the host deacetylase SIRT1. Interacts with host capping enzyme RNGTT; this interaction stimulates RNGTT. Binds to host KDR, and to the host integrins ITGAV/ITGB3 and ITGA5/ITGB1. Interacts with host KPNB1/importin beta-1 without previous binding to KPNA1/importin alpha-1. Interacts with EIF2AK2. Interacts with host nucleosome assembly protein NAP1L1; this interaction may be required for the transport of Tat within the nucleus, since the two proteins interact at the nuclear rim. Interacts with host C1QBP/SF2P32; this interaction involves lysine-acetylated Tat. Interacts with the host chemokine receptors CCR2, CCR3 and CXCR4. Interacts with host DPP4/CD26; this interaction may trigger an anti-proliferative effect. Interacts with host LDLR. Interacts with the host extracellular matrix metalloproteinase MMP1. Interacts with host PRMT6; this interaction mediates Tat's methylation. Interacts with, and is ubiquitinated by MDM2/Hdm2. Interacts with host PSMC3 and HTATIP2. Interacts with STAB1; this interaction may overcome SATB1-mediated repression of IL2 and IL2RA (interleukin) in T cells by binding to the same domain than HDAC1. Interacts (when acetylated) with human CDK13, thereby increasing HIV-1 mRNA splicing and promoting the production of the doubly spliced HIV-1 protein Nef. Interacts with host TBP; this interaction modulates the activity of transcriptional pre-initiation complex. Interacts with host RELA. Interacts with host PLSCR1; this interaction negatively regulates Tat transactivation activity by altering its subcellular distribution. Asymmetrical arginine methylation by host PRMT6 seems to diminish the transactivation capacity of Tat and affects the interaction with host CCNT1. In terms of processing, acetylation by EP300, CREBBP, GCN5L2/GCN5 and PCAF regulates the transactivation activity of Tat. EP300-mediated acetylation of Lys-50 promotes dissociation of Tat from the TAR RNA through the competitive binding to PCAF's bromodomain. In addition, the non-acetylated Tat's N-terminus can also interact with PCAF. PCAF-mediated acetylation of Lys-28 enhances Tat's binding to CCNT1. Lys-50 is deacetylated by SIRT1. Post-translationally, polyubiquitination by host MDM2 does not target Tat to degradation, but activates its transactivation function and fosters interaction with CCNT1 and TAR RNA. Phosphorylated by EIF2AK2 on serine and threonine residues adjacent to the basic region important for TAR RNA binding and function. Phosphorylation of Tat by EIF2AK2 is dependent on the prior activation of EIF2AK2 by dsRNA.

The protein localises to the host nucleus. It is found in the host nucleolus. Its subcellular location is the host cytoplasm. It localises to the secreted. Transcriptional activator that increases RNA Pol II processivity, thereby increasing the level of full-length viral transcripts. Recognizes a hairpin structure at the 5'-LTR of the nascent viral mRNAs referred to as the transactivation responsive RNA element (TAR) and recruits the cyclin T1-CDK9 complex (P-TEFb complex) that will in turn hyperphosphorylate the RNA polymerase II to allow efficient elongation. The CDK9 component of P-TEFb and other Tat-activated kinases hyperphosphorylate the C-terminus of RNA Pol II that becomes stabilized and much more processive. Other factors such as HTATSF1/Tat-SF1, SUPT5H/SPT5, and HTATIP2 are also important for Tat's function. Besides its effect on RNA Pol II processivity, Tat induces chromatin remodeling of proviral genes by recruiting the histone acetyltransferases (HATs) CREBBP, EP300 and PCAF to the chromatin. This also contributes to the increase in proviral transcription rate, especially when the provirus integrates in transcriptionally silent region of the host genome. To ensure maximal activation of the LTR, Tat mediates nuclear translocation of NF-kappa-B by interacting with host RELA. Through its interaction with host TBP, Tat may also modulate transcription initiation. Tat can reactivate a latently infected cell by penetrating in it and transactivating its LTR promoter. In the cytoplasm, Tat is thought to act as a translational activator of HIV-1 mRNAs. In terms of biological role, extracellular circulating Tat can be endocytosed by surrounding uninfected cells via the binding to several surface receptors such as CD26, CXCR4, heparan sulfate proteoglycans (HSPG) or LDLR. Neurons are rarely infected, but they internalize Tat via their LDLR. Through its interaction with nuclear HATs, Tat is potentially able to control the acetylation-dependent cellular gene expression. Modulates the expression of many cellular genes involved in cell survival, proliferation or in coding for cytokines or cytokine receptors. Tat plays a role in T-cell and neurons apoptosis. Tat induced neurotoxicity and apoptosis probably contribute to neuroAIDS. Circulating Tat also acts as a chemokine-like and/or growth factor-like molecule that binds to specific receptors on the surface of the cells, affecting many cellular pathways. In the vascular system, Tat binds to ITGAV/ITGB3 and ITGA5/ITGB1 integrins dimers at the surface of endothelial cells and competes with bFGF for heparin-binding sites, leading to an excess of soluble bFGF. This is Protein Tat from Homo sapiens (Human).